The following is a 321-amino-acid chain: Phospholipid phosphatase-related protein type 5 (321 aa).

The next 6 helical transmembrane spans lie at 10–30 (SSML…AYYF), 62–82 (AVPP…VIIV), 122–142 (FLGI…AGQV), 196–213 (AALS…ITNT), 225–245 (VLCL…VAEY), and 252–272 (VIAG…CVVN).

The protein belongs to the PA-phosphatase related phosphoesterase family. Isoform 1 is expressed in brain, lung, kidney and colon. Isoform 2 is expressed in placenta, skeletal muscle and kidney.

Its subcellular location is the cell membrane. Functionally, induces filopodia formation and promotes neurite growth in a CDC42-independent manner; impedes neurite growth inhibitory-mediated axonal retraction. In Homo sapiens (Human), this protein is Phospholipid phosphatase-related protein type 5.